Here is a 228-residue protein sequence, read N- to C-terminus: UPF0328 protein ECU07_0040 (228 aa).

Belongs to the UPF0328 family.

This Encephalitozoon cuniculi (strain GB-M1) (Microsporidian parasite) protein is UPF0328 protein ECU07_0040.